A 213-amino-acid polypeptide reads, in one-letter code: Thymidylate kinase (213 aa).

10–17 provides a ligand contact to ATP; that stretch reads GLEGAGKT.

Belongs to the thymidylate kinase family.

The enzyme catalyses dTMP + ATP = dTDP + ADP. Phosphorylation of dTMP to form dTDP in both de novo and salvage pathways of dTTP synthesis. The protein is Thymidylate kinase of Escherichia coli O1:K1 / APEC.